Here is a 534-residue protein sequence, read N- to C-terminus: 5,6-dihydroxyindole-2-carboxylic acid oxidase (534 aa).

Residues 1–23 (MLGPATFLPLTAALLLLIPGGRA) form the signal peptide. Over 24–477 (QFPRQCVTPE…WPSRALNFTE (454 aa)) the chain is Lumenal, melanosome. 5 disulfide bridges follow: Cys29/Cys40, Cys41/Cys65, Cys56/Cys99, Cys101/Cys110, and Cys113/Cys122. Residues Asn96 and Asn104 are each glycosylated (N-linked (GlcNAc...) asparagine). 2 N-linked (GlcNAc...) asparagine glycosylation sites follow: Asn175 and Asn181. The Zn(2+) site is built by His192, His215, and His224. Intrachain disulfides connect Cys258–Cys261 and Cys290–Cys303. N-linked (GlcNAc...) asparagine glycosylation is found at Asn304 and Asn350. Zn(2+)-binding residues include His377 and His381. The N-linked (GlcNAc...) asparagine glycan is linked to Asn385. His404 contributes to the Zn(2+) binding site. Residues 478–501 (IITIAVVAALVLVAVIFAAASCAV) form a helical membrane-spanning segment. At 502-534 (HRSRKDDVHQPLLGEQYPRYSEEYERDASQSAV) the chain is on the cytoplasmic side.

This sequence belongs to the tyrosinase family. Requires Cu(2+) as cofactor. It depends on Zn(2+) as a cofactor.

Its subcellular location is the melanosome membrane. It catalyses the reaction 2 5,6-dihydroxyindole-2-carboxylate + O2 = 2 indole-5,6-quinone-2-carboxylate + 2 H2O. It functions in the pathway pigment biosynthesis; melanin biosynthesis. In terms of biological role, plays a role in melanin biosynthesis. Catalyzes the oxidation of 5,6-dihydroxyindole-2-carboxylic acid (DHICA) into indole-5,6-quinone-2-carboxylic acid. May regulate or influence the type of melanin synthesized. Also to a lower extent, capable of hydroxylating tyrosine and producing melanin. This is 5,6-dihydroxyindole-2-carboxylic acid oxidase (TYRP1) from Ambystoma mexicanum (Axolotl).